Here is a 41-residue protein sequence, read N- to C-terminus: Fibrinogen beta chain (41 aa).

Residues 1–41 (ADDYDDEVLPDARGHRPIDRKREELPSLRPAPPPISGGGYR) are disordered. A Sulfotyrosine modification is found at Tyr4. Basic and acidic residues predominate over residues 10-26 (PDARGHRPIDRKREELP). A beta-chain polymerization, binding distal domain of another fibrin region spans residues 14–16 (GHR).

As to quaternary structure, heterohexamer; disulfide linked. Contains 2 sets of 3 non-identical chains (alpha, beta and gamma). The 2 heterotrimers are in head to head conformation with the N-termini in a small central domain. In terms of processing, conversion of fibrinogen to fibrin is triggered by thrombin, which cleaves fibrinopeptides A and B from alpha and beta chains, and thus exposes the N-terminal polymerization sites responsible for the formation of the soft clot.

The protein localises to the secreted. Its function is as follows. Cleaved by the protease thrombin to yield monomers which, together with fibrinogen alpha (FGA) and fibrinogen gamma (FGG), polymerize to form an insoluble fibrin matrix. Fibrin has a major function in hemostasis as one of the primary components of blood clots. In addition, functions during the early stages of wound repair to stabilize the lesion and guide cell migration during re-epithelialization. Was originally thought to be essential for platelet aggregation, based on in vitro studies using anticoagulated blood. However subsequent studies have shown that it is not absolutely required for thrombus formation in vivo. Enhances expression of SELP in activated platelets. Maternal fibrinogen is essential for successful pregnancy. Fibrin deposition is also associated with infection, where it protects against IFNG-mediated hemorrhage. May also facilitate the antibacterial immune response via both innate and T-cell mediated pathways. The chain is Fibrinogen beta chain (FGB) from Oryctolagus cuniculus (Rabbit).